Reading from the N-terminus, the 346-residue chain is UPF0718 protein YraQ (346 aa).

The next 9 helical transmembrane spans lie at 12-32 (PIQW…LWYV), 71-91 (MIYF…GSLI), 113-133 (LLGT…APVA), 146-166 (ALAF…FMGF), 167-187 (VLGW…VLLI), 223-243 (ALWT…LVLG), 260-280 (SLMW…PTAA), 296-316 (APAL…LIML), and 326-346 (WLTG…ALLF).

It belongs to the UPF0718 family.

The protein localises to the cell membrane. This Escherichia coli (strain K12) protein is UPF0718 protein YraQ (yraQ).